The primary structure comprises 507 residues: MFS-type transporter acdC (507 aa).

The interval 1-50 is disordered; it reads MSPNAPAVDIGAAPSLDTPEGDTKQPAEDHVEKDSNLVDWDGPDDPEHPQ. Over residues 21 to 36 the composition is skewed to basic and acidic residues; that stretch reads GDTKQPAEDHVEKDSN. Residue asparagine 51 is glycosylated (N-linked (GlcNAc...) asparagine). The chain crosses the membrane as a helical span at residues 58–78; it reads WGITFSLASMTMWITFSSSVL. Asparagine 90 is a glycosylation site (N-linked (GlcNAc...) asparagine). A run of 5 helical transmembrane segments spans residues 95 to 115, 125 to 145, 155 to 175, 186 to 206, and 215 to 235; these read VMPL…LCWA, LPTF…AVAP, FFVG…MADI, PFFF…GGFI, and WTAW…LLIV. An N-linked (GlcNAc...) asparagine glycan is attached at asparagine 257. Transmembrane regions (helical) follow at residues 290-310, 328-348, 371-391, 395-415, 442-462, and 466-486; these read PILI…YLFL, IAGL…GIII, LVEM…FGWA, HWMV…VLFM, FLGG…GVDW, and ILGF…IFGA.

It belongs to the major facilitator superfamily. CAR1 family.

The protein localises to the membrane. Its function is as follows. MFS-type transporter; part of the gene cluster that mediates the biosynthesis of aspcandine, a pyrrolobenzazepine alkaloid. The polypeptide is MFS-type transporter acdC (Aspergillus candidus).